A 139-amino-acid polypeptide reads, in one-letter code: D-ribose pyranase (139 aa).

Catalysis depends on His-20, which acts as the Proton donor. Substrate-binding positions include Asp-28, His-106, and 128 to 130 (YAN).

Belongs to the RbsD / FucU family. RbsD subfamily. As to quaternary structure, homodecamer.

Its subcellular location is the cytoplasm. The catalysed reaction is beta-D-ribopyranose = beta-D-ribofuranose. The protein operates within carbohydrate metabolism; D-ribose degradation; D-ribose 5-phosphate from beta-D-ribopyranose: step 1/2. In terms of biological role, catalyzes the interconversion of beta-pyran and beta-furan forms of D-ribose. The polypeptide is D-ribose pyranase (Edwardsiella ictaluri (strain 93-146)).